Here is a 573-residue protein sequence, read N- to C-terminus: E3 ubiquitin-protein ligase RNF168 (573 aa).

The segment at 16 to 55 adopts an RING-type zinc-finger fold; sequence CQICVEILFEPVTLPCNHTLCKPCFESTVEKASLCCPFCR. Position 70 is a phosphoserine (Ser-70). The LR motif 1 motif lies at 110-128; that stretch reads LSKPGELRREYEEEISKVE. The UMI motif signature appears at 143–151; sequence EEYIQKLLA. 2 disordered regions span residues 153–174 and 196–277; these read EEEE…QLKS and ASPL…EDMP. The segment covering 157–174 has biased composition (basic and acidic residues); the sequence is EKRQAEKRHREMEEQLKS. The MIU motif 1 signature appears at 168–191; the sequence is MEEQLKSDEELARRLSLDINNFCE. At Ser-197 the chain carries Phosphoserine. A Glycyl lysine isopeptide (Lys-Gly) (interchain with G-Cter in SUMO2) cross-link involves residue Lys-210. Over residues 231–243 the composition is skewed to polar residues; that stretch reads PKSQLGSASQSEV. The segment covering 245 to 261 has biased composition (basic and acidic residues); that stretch reads QEDRKSSMSKKIDDNSD. Residue Thr-363 is modified to Phosphothreonine. A Phosphoserine modification is found at Ser-416. Residues 440–463 carry the MIU motif 2 motif; the sequence is RHKQEKQDRLLALQLQEEVDQEQM. The disordered stretch occupies residues 456-528; sequence EEVDQEQMRP…NHQQPSFKIQ (73 aa). Positions 461–470 are enriched in basic and acidic residues; the sequence is EQMRPDRQKG. Positions 467–478 match the LR motif 2 motif; it reads RQKGSPDGYQLR. Phosphoserine is present on Ser-471. Positions 494-519 are enriched in basic and acidic residues; sequence NSRDRNSKRQTELEQPKPRTDSKNEN. A Glycyl lysine isopeptide (Lys-Gly) (interchain with G-Cter in SUMO2) cross-link involves residue Lys-530. The segment at 540-573 is disordered; the sequence is NSTNDNCNVSKTAHSLQPSKSQKSIFQMFQRVTK.

The protein belongs to the RNF168 family. Monomer. Interacts with UBE2N/UBC13. Sumoylated with SUMO1 by PIAS4 in response to double-strand breaks (DSBs). Post-translationally, ubiquitinated.

Its subcellular location is the nucleus. It catalyses the reaction S-ubiquitinyl-[E2 ubiquitin-conjugating enzyme]-L-cysteine + [acceptor protein]-L-lysine = [E2 ubiquitin-conjugating enzyme]-L-cysteine + N(6)-ubiquitinyl-[acceptor protein]-L-lysine.. The protein operates within protein modification; protein ubiquitination. Its function is as follows. E3 ubiquitin-protein ligase required for accumulation of repair proteins to sites of DNA damage. Acts with UBE2N/UBC13 to amplify the RNF8-dependent histone ubiquitination. Recruited to sites of DNA damage at double-strand breaks (DSBs) by binding to ubiquitinated histone H2A and H2AX and amplifies the RNF8-dependent H2A ubiquitination, promoting the formation of 'Lys-63'-linked ubiquitin conjugates. This leads to concentrate ubiquitinated histones H2A and H2AX at DNA lesions to the threshold required for recruitment of TP53BP1 and BRCA1. Also recruited at DNA interstrand cross-links (ICLs) sites and promotes accumulation of 'Lys-63'-linked ubiquitination of histones H2A and H2AX, leading to recruitment of FAAP20 and Fanconi anemia (FA) complex, followed by interstrand cross-link repair. H2A ubiquitination also mediates the ATM-dependent transcriptional silencing at regions flanking DSBs in cis, a mechanism to avoid collision between transcription and repair intermediates. Also involved in class switch recombination in immune system, via its role in regulation of DSBs repair. Following DNA damage, promotes the ubiquitination and degradation of JMJD2A/KDM4A in collaboration with RNF8, leading to unmask H4K20me2 mark and promote the recruitment of TP53BP1 at DNA damage sites. Not able to initiate 'Lys-63'-linked ubiquitination in vitro; possibly due to partial occlusion of the UBE2N/UBC13-binding region. Catalyzes monoubiquitination of 'Lys-13' and 'Lys-15' of nucleosomal histone H2A (H2AK13Ub and H2AK15Ub, respectively). In Bos taurus (Bovine), this protein is E3 ubiquitin-protein ligase RNF168.